A 279-amino-acid chain; its full sequence is Thymidylate synthase (279 aa).

Residue 141 to 142 coordinates dUMP; sequence RR. Residue cysteine 161 is the Nucleophile of the active site. DUMP is bound by residues 181-184, asparagine 192, and 222-224; these read RSND and HVY. Residue aspartate 184 coordinates (6R)-5,10-methylene-5,6,7,8-tetrahydrofolate. Alanine 278 is a binding site for (6R)-5,10-methylene-5,6,7,8-tetrahydrofolate.

Belongs to the thymidylate synthase family. Bacterial-type ThyA subfamily. In terms of assembly, homodimer.

The protein resides in the cytoplasm. The enzyme catalyses dUMP + (6R)-5,10-methylene-5,6,7,8-tetrahydrofolate = 7,8-dihydrofolate + dTMP. It functions in the pathway pyrimidine metabolism; dTTP biosynthesis. Functionally, catalyzes the reductive methylation of 2'-deoxyuridine-5'-monophosphate (dUMP) to 2'-deoxythymidine-5'-monophosphate (dTMP) while utilizing 5,10-methylenetetrahydrofolate (mTHF) as the methyl donor and reductant in the reaction, yielding dihydrofolate (DHF) as a by-product. This enzymatic reaction provides an intracellular de novo source of dTMP, an essential precursor for DNA biosynthesis. The polypeptide is Thymidylate synthase (Bacillus mojavensis).